Here is a 543-residue protein sequence, read N- to C-terminus: Zinc finger protein 34 (543 aa).

Positions 14-87 (VTFEDVAVFL…DMHGAEQPSV (74 aa)) constitute a KRAB domain. The segment at 84 to 151 (QPSVDGSAHG…PGEQRGPRLV (68 aa)) is disordered. Positions 124-147 (EPGEVHERVREPEGRLDRPGEQRG) are enriched in basic and acidic residues. 12 C2H2-type zinc fingers span residues 179–201 (HKCDICEQSFEQRSYLNNHKRVH), 234–256 (YYCGCCGKAFRYSANLVKHQRLH), 262–284 (YKCEECGKAFHQSCELISHRRMH), 290–312 (YRCDECGKTFNQRPNLMKHQRIH), 318–340 (YKCSECGKHFSAYSSLIYHQRIH), 346–368 (YKCSDCGKAFSDGSILIRHRRTH), 374–396 (YECKECGKGFTQSSNLIQHQRIH), 402–424 (YKCNECEKAFIQKTKLVEHQRSH), 430–452 (YECNDCGKVFSQSTHLIQHQRIH), 458–480 (YKCSECGKAFHNSSRLIHHQRSH), 486–508 (YKCADCKKAFSQGTYLLQHRRIH), and 514–536 (YTCGECGKAFRHSSNMSQHQRIH).

This sequence belongs to the krueppel C2H2-type zinc-finger protein family.

It localises to the nucleus. May be involved in transcriptional regulation. This chain is Zinc finger protein 34 (ZNF34), found in Bos taurus (Bovine).